A 241-amino-acid polypeptide reads, in one-letter code: Thiamine import ATP-binding protein ThiQ (241 aa).

In terms of domain architecture, ABC transporter spans 7–235 (IRLSDVRFSY…AGPEALRHYI (229 aa)). 37–44 (GPSGSGKS) contacts ATP.

The protein belongs to the ABC transporter superfamily. Thiamine importer (TC 3.A.1.19.1) family. The complex is composed of two ATP-binding proteins (ThiQ), two transmembrane proteins (ThiP) and a solute-binding protein (ThiB).

The protein localises to the cell inner membrane. The catalysed reaction is thiamine(out) + ATP + H2O = thiamine(in) + ADP + phosphate + H(+). Its function is as follows. Part of the ABC transporter complex ThiBPQ involved in thiamine import. Responsible for energy coupling to the transport system. The chain is Thiamine import ATP-binding protein ThiQ from Brucella melitensis biotype 1 (strain ATCC 23456 / CCUG 17765 / NCTC 10094 / 16M).